The primary structure comprises 91 residues: Large ribosomal subunit protein uL23c (91 aa).

This sequence belongs to the universal ribosomal protein uL23 family. As to quaternary structure, part of the 50S ribosomal subunit.

The protein localises to the plastid. Its subcellular location is the chloroplast. Binds to 23S rRNA. The sequence is that of Large ribosomal subunit protein uL23c (rpl23) from Huperzia lucidula (Shining clubmoss).